The following is a 617-amino-acid chain: Electron transfer flavoprotein-ubiquinone oxidoreductase, mitochondrial (617 aa).

The transit peptide at 1–33 directs the protein to the mitochondrion; sequence MQVLLARLACPVYQCFHAIKIKKNYLPLCATRW. 71–85 lines the FAD pocket; it reads VVIVGAGPAGLSAAA. K96 bears the N6-acetyllysine mark. Residues 109-130 lie within the membrane without spanning it; that stretch reads IGAHTLSGACLDPRALQELFPD. An N6-acetyllysine mark is found at K132 and K223. A ubiquinone contacts are provided by G305 and G306. The residue at position 357 (K357) is an N6-acetyllysine. Residues 428 to 447 lie within the membrane without spanning it; that stretch reads IGLDVTEYEDNLKKSWVWKE. The residue at position 551 (S551) is a Phosphoserine. Residues C561, C586, C589, and C592 each coordinate [4Fe-4S] cluster. The region spanning 577–606 is the 4Fe-4S ferredoxin-type domain; that stretch reads FRLQINAQNCVHCKTCDIKDPSQNINWVVP.

Belongs to the ETF-QO/FixC family. As to quaternary structure, monomer. [4Fe-4S] cluster serves as cofactor. The cofactor is FAD.

Its subcellular location is the mitochondrion inner membrane. The enzyme catalyses a ubiquinone + reduced [electron-transfer flavoprotein] = a ubiquinol + oxidized [electron-transfer flavoprotein] + H(+). Its function is as follows. Accepts electrons from ETF and reduces ubiquinone. This Bos taurus (Bovine) protein is Electron transfer flavoprotein-ubiquinone oxidoreductase, mitochondrial (ETFDH).